The primary structure comprises 320 residues: Cytochrome c1-1, heme protein, mitochondrial (320 aa).

Residues 1–77 (MSLGKKIRIG…LLSFATIAYS (77 aa)) constitute a mitochondrion transit peptide. The Mitochondrial intermembrane segment spans residues 78–280 (DEAEHGLECP…WAAEPEMEER (203 aa)). Positions 103–210 (ASIRRGHQVY…NGQNYVFALL (108 aa)) constitute a Cytochrome c domain. Cys-116, Cys-119, His-120, and Met-239 together coordinate heme c. Residues 281 to 301 (KLMGFKWIFVLSLALLQAAYY) form a helical membrane-spanning segment. The Mitochondrial matrix portion of the chain corresponds to 302–320 (RRLRWSVLKSRKLVLDVVN).

It belongs to the cytochrome c family. Component of the ubiquinol-cytochrome c oxidoreductase (cytochrome b-c1 complex, complex III, CIII), a multisubunit enzyme composed of 3 respiratory subunits cytochrome b, cytochrome c1 and Rieske protein, 2 core protein subunits, and additional low-molecular weight protein subunits. The complex exists as an obligatory dimer and forms supercomplexes (SCs) in the inner mitochondrial membrane with cytochrome c oxidase (complex IV, CIV). Requires heme c as cofactor. In terms of tissue distribution, in all tissues analyzed.

The protein resides in the mitochondrion inner membrane. It carries out the reaction a quinol + 2 Fe(III)-[cytochrome c](out) = a quinone + 2 Fe(II)-[cytochrome c](out) + 2 H(+)(out). Its function is as follows. Component of the ubiquinol-cytochrome c oxidoreductase, a multisubunit transmembrane complex that is part of the mitochondrial electron transport chain which drives oxidative phosphorylation. The respiratory chain contains 3 multisubunit complexes succinate dehydrogenase (complex II, CII), ubiquinol-cytochrome c oxidoreductase (cytochrome b-c1 complex, complex III, CIII) and cytochrome c oxidase (complex IV, CIV), that cooperate to transfer electrons derived from NADH and succinate to molecular oxygen, creating an electrochemical gradient over the inner membrane that drives transmembrane transport and the ATP synthase. The cytochrome b-c1 complex catalyzes electron transfer from ubiquinol to cytochrome c, linking this redox reaction to translocation of protons across the mitochondrial inner membrane, with protons being carried across the membrane as hydrogens on the quinol. In the process called Q cycle, 2 protons are consumed from the matrix, 4 protons are released into the intermembrane space and 2 electrons are passed to cytochrome c. Cytochrome c1 is a catalytic core subunit containing a c-type heme. It transfers electrons from the [2Fe-2S] iron-sulfur cluster of the Rieske protein to cytochrome c. The sequence is that of Cytochrome c1-1, heme protein, mitochondrial (CYCL) from Solanum tuberosum (Potato).